A 494-amino-acid polypeptide reads, in one-letter code: Sugar phosphate exchanger 3 (494 aa).

A helical membrane pass occupies residues 16 to 36 (FSHHHVVVFLLTFFSYSLLHA). Asn-58 is a glycosylation site (N-linked (GlcNAc...) asparagine). Helical transmembrane passes span 81 to 101 (TLFL…GLFI), 113 to 133 (WVLS…GALT), 147 to 167 (LWIV…AVMG), 177 to 197 (VVFG…ACLA), and 209 to 229 (FLVT…GLLV). Asn-266 carries N-linked (GlcNAc...) asparagine glycosylation. 6 helical membrane passes run 297–317 (LAYA…PFYL), 333–353 (IWYD…SDVL), 357–377 (APVL…YSRS), 386–406 (LLMT…SSAI), 428–448 (GIVD…VSLI), and 452–472 (LGWM…IVFI).

Belongs to the major facilitator superfamily. Organophosphate:Pi antiporter (OPA) (TC 2.A.1.4) family. Interacts with ATRAID; the interaction is direct and both proteins are mutually dependent for their stability. Glycosylated. As to expression, expressed in liver, kidney, intestine and pancreas.

Its subcellular location is the endoplasmic reticulum membrane. The protein resides in the lysosome membrane. In terms of biological role, unlike the other SLC37 members, lacks glucose-6-phosphate antiporter activity. In osteoclasts, forms a transporter complex with ATRAID for nitrogen-containing-bisphophonates (N-BPs) required for releasing N-BP molecules that have trafficked to lysosomes through fluid-phase endocytosis into the cytosol. This Homo sapiens (Human) protein is Sugar phosphate exchanger 3.